The primary structure comprises 66 residues: Large ribosomal subunit protein uL29 (66 aa).

It belongs to the universal ribosomal protein uL29 family.

The sequence is that of Large ribosomal subunit protein uL29 from Thermococcus sibiricus (strain DSM 12597 / MM 739).